A 124-amino-acid polypeptide reads, in one-letter code: Small ribosomal subunit protein uS12 (124 aa).

Position 89 is a 3-methylthioaspartic acid (aspartate 89). Lysine 108 is modified (N6-acetyllysine).

The protein belongs to the universal ribosomal protein uS12 family. In terms of assembly, part of the 30S ribosomal subunit. Contacts proteins S8 and S17. May interact with IF1 in the 30S initiation complex.

With S4 and S5 plays an important role in translational accuracy. Functionally, interacts with and stabilizes bases of the 16S rRNA that are involved in tRNA selection in the A site and with the mRNA backbone. Located at the interface of the 30S and 50S subunits, it traverses the body of the 30S subunit contacting proteins on the other side and probably holding the rRNA structure together. The combined cluster of proteins S8, S12 and S17 appears to hold together the shoulder and platform of the 30S subunit. The chain is Small ribosomal subunit protein uS12 from Escherichia coli O139:H28 (strain E24377A / ETEC).